We begin with the raw amino-acid sequence, 268 residues long: Ubiquinone biosynthesis protein COQ4 homolog, mitochondrial (268 aa).

Zn(2+)-binding residues include histidine 171, aspartate 172, histidine 175, and glutamate 187.

This sequence belongs to the COQ4 family. In terms of assembly, component of a multi-subunit COQ enzyme complex. Requires Zn(2+) as cofactor.

It is found in the mitochondrion inner membrane. The enzyme catalyses a 4-hydroxy-3-methoxy-5-(all-trans-polyprenyl)benzoate + H(+) = a 2-methoxy-6-(all-trans-polyprenyl)phenol + CO2. It participates in cofactor biosynthesis; ubiquinone biosynthesis. Lyase that catalyzes the C1-decarboxylation of 4-hydroxy-3-methoxy-5-(all-trans-polyprenyl)benzoic acid into 2-methoxy-6-(all-trans-polyprenyl)phenol during ubiquinone biosynthesis. The sequence is that of Ubiquinone biosynthesis protein COQ4 homolog, mitochondrial from Drosophila melanogaster (Fruit fly).